A 429-amino-acid polypeptide reads, in one-letter code: Adenylosuccinate synthetase (429 aa).

GTP-binding positions include 12–18 (GDEGKGK) and 40–42 (GHT). Residue Asp13 is the Proton acceptor of the active site. Mg(2+)-binding residues include Asp13 and Gly40. IMP is bound by residues 13–16 (DEGK), 38–41 (NAGH), Thr129, Arg143, Gln223, Thr238, and Arg302. His41 serves as the catalytic Proton donor. 298–304 (TVTGRKR) serves as a coordination point for substrate. Residues Arg304, 330 to 332 (KLD), and 412 to 414 (STS) contribute to the GTP site.

It belongs to the adenylosuccinate synthetase family. In terms of assembly, homodimer. Mg(2+) serves as cofactor.

The protein resides in the cytoplasm. The enzyme catalyses IMP + L-aspartate + GTP = N(6)-(1,2-dicarboxyethyl)-AMP + GDP + phosphate + 2 H(+). Its pathway is purine metabolism; AMP biosynthesis via de novo pathway; AMP from IMP: step 1/2. Functionally, plays an important role in the de novo pathway of purine nucleotide biosynthesis. Catalyzes the first committed step in the biosynthesis of AMP from IMP. The protein is Adenylosuccinate synthetase of Sphingopyxis alaskensis (strain DSM 13593 / LMG 18877 / RB2256) (Sphingomonas alaskensis).